Reading from the N-terminus, the 1084-residue chain is TNF receptor-associated factor family protein DDB_G0272098 (1084 aa).

Residues 19–103 (YYCPDCGELL…KNRYYETKNF (85 aa)) form the LIM zinc-binding domain. TRAF-type zinc fingers lie at residues 122–190 (KHIK…IDHE) and 191–248 (IHLS…YNMS). The stretch at 265-321 (IEEQNQDIKELHNFIENHLSKKFIDLDTIVNIQKYLIKNKNQKISQLTEIIKRVDNS) forms a coiled coil. Disordered regions lie at residues 348–392 (YKNS…NINE), 490–523 (IRQQQQQQQQQQQQQQQQQQQPPPTPLPPQNTTI), 537–656 (NNNI…KDGL), and 709–897 (SIVE…NDDD). Composition is skewed to low complexity over residues 349-375 (KNSNSNNNNNNKNTNENENTNENTNEN), 492-509 (QQQQQQQQQQQQQQQQQQ), 537-549 (NNNINENNNNNNK), and 556-570 (ITAATATNNSNTTST). Residues 489–553 (LIRQQQQQQQ…NNNNNKNNDD (65 aa)) are a coiled coil. Residues 571-586 (HTILNGTNNEASMTDI) show a composition bias toward polar residues. A compositionally biased stretch (low complexity) spans 587-637 (NETTSTTTTAETTEATASESTEESNNTAETTTTTTTTTTTITTAAETVNST). A compositionally biased stretch (basic and acidic residues) spans 644–656 (TSEKVEEKGKDGL). A coiled-coil region spans residues 735 to 852 (NGNENENENE…NNNNNNNENV (118 aa)). The segment covering 739–757 (NENENENENENENENENEN) has biased composition (acidic residues). The segment covering 774 to 785 (SNINTSNDTEPT) has biased composition (polar residues). The segment covering 790–799 (EDIKKNKENE) has biased composition (basic and acidic residues). Residues 809 to 849 (NNNIKSVEDTNNNNNNNNNNNNNNNNNNNNNNNNNNNNNNN) show a composition bias toward low complexity. 2 stretches are compositionally biased toward basic and acidic residues: residues 853–864 (YDIKKDRNRENV) and 875–892 (ENGKINDNGDVKMGSEDK). The region spanning 909 to 1042 (IFRNQILFKD…DNCFIVNLEV (134 aa)) is the MATH domain. The segment at 1056–1084 (LLQKSSPPAATTTTTTSSSSSKTTPKTKR) is disordered. Positions 1059–1084 (KSSPPAATTTTTTSSSSSKTTPKTKR) are enriched in low complexity.

It belongs to the TNF receptor-associated factor family.

It is found in the cytoplasm. Probable adapter protein and signal transducer that links members of the tumor necrosis factor receptor family to different signaling pathways by association with the receptor cytoplasmic domain and kinases. The chain is TNF receptor-associated factor family protein DDB_G0272098 from Dictyostelium discoideum (Social amoeba).